The sequence spans 661 residues: UvrABC system protein C (661 aa).

Positions 52–130 constitute a GIY-YIG domain; the sequence is HKPGVYRMVD…IKRLHPRFNV (79 aa). The 36-residue stretch at 240-275 folds into the UVR domain; sequence QSIKNDMVQAMHKAAKNFDFEQAAAYRDRLSALSHI.

It belongs to the UvrC family. As to quaternary structure, interacts with UvrB in an incision complex.

The protein resides in the cytoplasm. In terms of biological role, the UvrABC repair system catalyzes the recognition and processing of DNA lesions. UvrC both incises the 5' and 3' sides of the lesion. The N-terminal half is responsible for the 3' incision and the C-terminal half is responsible for the 5' incision. This chain is UvrABC system protein C, found in Bartonella henselae (strain ATCC 49882 / DSM 28221 / CCUG 30454 / Houston 1) (Rochalimaea henselae).